The chain runs to 443 residues: UDP-N-acetylmuramate--L-alanine ligase (443 aa).

110–116 (GAHGKTS) is an ATP binding site.

It belongs to the MurCDEF family.

It is found in the cytoplasm. The enzyme catalyses UDP-N-acetyl-alpha-D-muramate + L-alanine + ATP = UDP-N-acetyl-alpha-D-muramoyl-L-alanine + ADP + phosphate + H(+). It functions in the pathway cell wall biogenesis; peptidoglycan biosynthesis. In terms of biological role, cell wall formation. The polypeptide is UDP-N-acetylmuramate--L-alanine ligase (Streptococcus equi subsp. zooepidemicus (strain H70)).